We begin with the raw amino-acid sequence, 303 residues long: 2-dehydropantoate 2-reductase (303 aa).

Residues 7–12 (GCGALG), asparagine 98, and alanine 122 each bind NADP(+). A substrate-binding site is contributed by asparagine 98. Lysine 176 acts as the Proton donor in catalysis. Residues asparagine 180, asparagine 184, asparagine 194, and serine 244 each contribute to the substrate site. NADP(+) is bound at residue glutamate 256.

Belongs to the ketopantoate reductase family.

It is found in the cytoplasm. It catalyses the reaction (R)-pantoate + NADP(+) = 2-dehydropantoate + NADPH + H(+). It functions in the pathway cofactor biosynthesis; (R)-pantothenate biosynthesis; (R)-pantoate from 3-methyl-2-oxobutanoate: step 2/2. Functionally, catalyzes the NADPH-dependent reduction of ketopantoate into pantoic acid. The chain is 2-dehydropantoate 2-reductase (panE) from Yersinia pestis.